A 368-amino-acid chain; its full sequence is MEDKYIGLALAMSSSLAIGTSFIITKKGLMDASARTGGTDGVQASDYLQNPIWWGGMITMAIGEIANFAAYTFAPAILVTPLGALSVIIGAVLAAIFLKERLGTLGKMGCAICLMGSVIIILHAPPDKEVQTVDEILGYATQPGFMFYCTVVTLYSLFMIYKIVPKYGNTNPMIYLSICSSVGSISVMSIKAFGIALKLTLGGNNQFTHVSTYLFLIVVALCIVTQMNYFNKALDQFDTSIVNPLYYVTFTTFTLAASFILFKGFNTSSAVDIISLLIGFLIIFSGVYLLNISRSESPMVDRDREIFGVHTSKDMAPLDNGVGGFSTVRRSMQINRTSEYDNEESVGLRRFDSFEIDSGDEDTRNYRH.

Topologically, residues 1 to 4 (MEDK) are extracellular. Residues 5 to 25 (YIGLALAMSSSLAIGTSFIIT) traverse the membrane as a helical segment. Residues 26–50 (KKGLMDASARTGGTDGVQASDYLQN) lie on the Cytoplasmic side of the membrane. A helical transmembrane segment spans residues 51 to 71 (PIWWGGMITMAIGEIANFAAY). Residues 72–76 (TFAPA) are Extracellular-facing. The helical transmembrane segment at 77 to 97 (ILVTPLGALSVIIGAVLAAIF) threads the bilayer. At 98–101 (LKER) the chain is on the cytoplasmic side. A helical membrane pass occupies residues 102–122 (LGTLGKMGCAICLMGSVIIIL). Residues 123–143 (HAPPDKEVQTVDEILGYATQP) are Extracellular-facing. A helical membrane pass occupies residues 144–164 (GFMFYCTVVTLYSLFMIYKIV). The Cytoplasmic portion of the chain corresponds to 165–175 (PKYGNTNPMIY). The chain crosses the membrane as a helical span at residues 176–196 (LSICSSVGSISVMSIKAFGIA). At 197-206 (LKLTLGGNNQ) the chain is on the extracellular side. A helical membrane pass occupies residues 207-227 (FTHVSTYLFLIVVALCIVTQM). Topologically, residues 228–240 (NYFNKALDQFDTS) are cytoplasmic. The helical transmembrane segment at 241 to 261 (IVNPLYYVTFTTFTLAASFIL) threads the bilayer. Topologically, residues 262-269 (FKGFNTSS) are extracellular. An N-linked (GlcNAc...) asparagine glycan is attached at Asn266. Residues 270–290 (AVDIISLLIGFLIIFSGVYLL) traverse the membrane as a helical segment. Over 291-368 (NISRSESPMV…GDEDTRNYRH (78 aa)) the chain is Cytoplasmic.

The protein belongs to the NIPA family.

It localises to the cell membrane. It is found in the early endosome. It catalyses the reaction Mg(2+)(in) = Mg(2+)(out). Its function is as follows. Probably acts as a selective Mg(2+) transporter. Plays a role in cell wall integrity and in engulfment by host macrophages. In Candida albicans (strain SC5314 / ATCC MYA-2876) (Yeast), this protein is Probable magnesium transporter.